Consider the following 681-residue polypeptide: MNGKKLPDGGILFDETDDEDDDANLAATDTAEASRSVAGMDWNAGWKNESGLKGMDLIGEFVKHLPNSPGVYRMFNEAGDVLYVGKARSLKKRVGNYAQGRVHSNRIAQMVRFTTHMEFVTTRTETEALLLEANLIKRLRPRFNVLLRDDKSFPYILITADNRAPAIFKHRGARARKGDYFGPFASAGAVGRTINSLQRAFLIRTCTDSVFETRTRPCLLYQIKRCSGPCTHEVSDEGYAELVKEAKDFLSGKSQAVKTAIARQMNEASEDLDFERAAIYRDRLAALSHVQSHQGINPAGIEEADVFAIHHEGGISCIQVFFFRTGQNWGNRAYFPKADPSLPGSEILNAFLAQFYDDKPVPKQILLSETVEEQELLAAALGEKAGHKVTISVPQRGEKKDITDHVLANAREAHGRKLAETSSQARLLKGFAETFNLPYVPRRIEIYDNSHIMGTNAVGGMVVAGPEGFVKNQYRKFNIKSTDITPGDDFGMMREVMTRRFSRLLKEEGKPDRAQTPTPEEAADLPFPAWPDVILIDGGQGQMTAVRAILDELGIRDCVTAIGVAKGVDREAGRERFFADGRSDFSLPPRDPVLYFIQRMRDEAHRFAIGSHRARRKKEMVRNPLDEISGIGPGRKRSLLQHFGTAKAVSRAGLNDLMTVTGISETVARQIYNHFHESGSD.

Residues 1–23 are disordered; it reads MNGKKLPDGGILFDETDDEDDDA. A compositionally biased stretch (acidic residues) spans 14–23; the sequence is DETDDEDDDA. The region spanning 67 to 145 is the GIY-YIG domain; it reads NSPGVYRMFN…IKRLRPRFNV (79 aa). The UVR domain occupies 255–290; the sequence is QAVKTAIARQMNEASEDLDFERAAIYRDRLAALSHV.

The protein belongs to the UvrC family. Interacts with UvrB in an incision complex.

The protein resides in the cytoplasm. Functionally, the UvrABC repair system catalyzes the recognition and processing of DNA lesions. UvrC both incises the 5' and 3' sides of the lesion. The N-terminal half is responsible for the 3' incision and the C-terminal half is responsible for the 5' incision. The protein is UvrABC system protein C of Agrobacterium fabrum (strain C58 / ATCC 33970) (Agrobacterium tumefaciens (strain C58)).